A 529-amino-acid polypeptide reads, in one-letter code: ATP synthase F(1) complex catalytic subunit beta, mitochondrial (529 aa).

Residues 1–46 (MLSLVGRVASASASGALRGLSPSAALPQAQLLLRAAPAGVHPARDY) constitute a mitochondrion transit peptide. S106 is a glycosylation site (O-linked (GlcNAc) serine). Residues K124, K133, and K161 each carry the N6-acetyllysine; alternate modification. K124, K133, and K161 each carry N6-succinyllysine; alternate. K198 bears the N6-acetyllysine mark. ADP contacts are provided by G209, V210, G211, K212, T213, and V214. Residue G209 coordinates ATP. G209, V210, G211, K212, and T213 together coordinate phosphate. ATP-binding residues include G211, K212, T213, and V214. T213 provides a ligand contact to Mg(2+). Position 238 (E238) interacts with Mg(2+). R239 serves as a coordination point for ATP. 2 positions are modified to N6-acetyllysine; alternate: K259 and K264. Residues K259 and K264 each carry the N6-succinyllysine; alternate modification. T312 carries the phosphothreonine modification. N6-acetyllysine is present on K426. The residue at position 433 (S433) is a Phosphoserine. N6-acetyllysine occurs at positions 480 and 485. Position 522 is an N6-acetyllysine; alternate (K522). The residue at position 522 (K522) is an N6-succinyllysine; alternate. S529 carries the phosphoserine modification.

Belongs to the ATPase alpha/beta chains family. As to quaternary structure, homotrimer. Component of the ATP synthase complex composed at least of ATP5F1A/subunit alpha, ATP5F1B/subunit beta, ATP5MC1/subunit c (homooctomer), MT-ATP6/subunit a, MT-ATP8/subunit 8, ATP5ME/subunit e, ATP5MF/subunit f, ATP5MG/subunit g, ATP5MK/subunit k, ATP5MJ/subunit j, ATP5F1C/subunit gamma, ATP5F1D/subunit delta, ATP5F1E/subunit epsilon, ATP5PF/subunit F6, ATP5PB/subunit b, ATP5PD/subunit d, ATP5PO/subunit OSCP. ATP synthase complex consists of a soluble F(1) head domain (subunits alpha(3) and beta(3)) - the catalytic core - and a membrane F(0) domain - the membrane proton channel (subunits c, a, 8, e, f, g, k and j). These two domains are linked by a central stalk (subunits gamma, delta, and epsilon) rotating inside the F1 region and a stationary peripheral stalk (subunits F6, b, d, and OSCP). Interacts with PPIF. Interacts with BCL2L1 isoform BCL-X(L); the interaction mediates the association of BCL2L1 isoform BCL-X(L) with the mitochondrial membrane F(1)F(0) ATP synthase and enhances neurons metabolic efficiency. Interacts with CLN5 and PPT1. Interacts with S100A1; this interaction increases F1-ATPase activity. Interacts with MTLN. Interacts with TTC5/STRAP; the interaction results in decreased mitochondrial ATP production. Acetylation of Lys-133 is observed in liver mitochondria from fasted mice but not from fed mice.

The protein resides in the mitochondrion inner membrane. It carries out the reaction ATP + H2O + 4 H(+)(in) = ADP + phosphate + 5 H(+)(out). Its function is as follows. Catalytic subunit beta, of the mitochondrial membrane ATP synthase complex (F(1)F(0) ATP synthase or Complex V) that produces ATP from ADP in the presence of a proton gradient across the membrane which is generated by electron transport complexes of the respiratory chain. ATP synthase complex consist of a soluble F(1) head domain - the catalytic core - and a membrane F(1) domain - the membrane proton channel. These two domains are linked by a central stalk rotating inside the F(1) region and a stationary peripheral stalk. During catalysis, ATP synthesis in the catalytic domain of F(1) is coupled via a rotary mechanism of the central stalk subunits to proton translocation. In vivo, can only synthesize ATP although its ATP hydrolase activity can be activated artificially in vitro. With the subunit alpha (ATP5F1A), forms the catalytic core in the F(1) domain. The sequence is that of ATP synthase F(1) complex catalytic subunit beta, mitochondrial from Mus musculus (Mouse).